The sequence spans 337 residues: DNA-directed RNA polymerase subunit alpha (337 aa).

The segment at 1–233 (MIQKNWQELI…DQLSIFVNFE (233 aa)) is alpha N-terminal domain (alpha-NTD). An alpha C-terminal domain (alpha-CTD) region spans residues 249–337 (FNPALLKKVD…DLAKRYEDQY (89 aa)).

It belongs to the RNA polymerase alpha chain family. In terms of assembly, homodimer. The RNAP catalytic core consists of 2 alpha, 1 beta, 1 beta' and 1 omega subunit. When a sigma factor is associated with the core the holoenzyme is formed, which can initiate transcription.

The enzyme catalyses RNA(n) + a ribonucleoside 5'-triphosphate = RNA(n+1) + diphosphate. Its function is as follows. DNA-dependent RNA polymerase catalyzes the transcription of DNA into RNA using the four ribonucleoside triphosphates as substrates. This is DNA-directed RNA polymerase subunit alpha from Brucella abortus (strain S19).